The chain runs to 550 residues: Tyrosinase HcTyr2 (550 aa).

His56, His84, His93, His282, His286, and His326 together coordinate Cu cation.

This sequence belongs to the tyrosinase family. The cofactor is Cu(2+).

The enzyme catalyses L-tyrosine + O2 = L-dopaquinone + H2O. It carries out the reaction 2 L-tyrosine + O2 = 2 L-dopa. It catalyses the reaction 2 L-dopa + O2 = 2 L-dopaquinone + 2 H2O. Copper-containing oxidase that catalyzes the conversion of L-tyrosine to L-dopa and then to L-dopaquinone. Can use various phenols such as p-coumaric acid, phenol, pyrocatechol, syringol or pyrogallol. Accepts several of the constituents of lignin and potentially participates in lignin functionalization. This is Tyrosinase HcTyr2 from Hahella sp. (strain CCB-MM4).